The sequence spans 546 residues: Glucose-6-phosphate isomerase 1 (546 aa).

Residue Glu353 is the Proton donor of the active site. Residues His384 and Lys512 contribute to the active site.

It belongs to the GPI family.

Its subcellular location is the cytoplasm. The enzyme catalyses alpha-D-glucose 6-phosphate = beta-D-fructose 6-phosphate. Its pathway is carbohydrate biosynthesis; gluconeogenesis. The protein operates within carbohydrate degradation; glycolysis; D-glyceraldehyde 3-phosphate and glycerone phosphate from D-glucose: step 2/4. Its function is as follows. Catalyzes the reversible isomerization of glucose-6-phosphate to fructose-6-phosphate. The polypeptide is Glucose-6-phosphate isomerase 1 (Colwellia psychrerythraea (strain 34H / ATCC BAA-681) (Vibrio psychroerythus)).